Reading from the N-terminus, the 229-residue chain is 5'-methylthioadenosine/S-adenosylhomocysteine nucleosidase (229 aa).

The active-site Proton acceptor is glutamate 12. Substrate-binding positions include glycine 78, isoleucine 152, and 173-174 (ME). Residue aspartate 197 is the Proton donor of the active site.

It belongs to the PNP/UDP phosphorylase family. MtnN subfamily.

The catalysed reaction is S-adenosyl-L-homocysteine + H2O = S-(5-deoxy-D-ribos-5-yl)-L-homocysteine + adenine. It carries out the reaction S-methyl-5'-thioadenosine + H2O = 5-(methylsulfanyl)-D-ribose + adenine. The enzyme catalyses 5'-deoxyadenosine + H2O = 5-deoxy-D-ribose + adenine. It participates in amino-acid biosynthesis; L-methionine biosynthesis via salvage pathway; S-methyl-5-thio-alpha-D-ribose 1-phosphate from S-methyl-5'-thioadenosine (hydrolase route): step 1/2. Its function is as follows. Catalyzes the irreversible cleavage of the glycosidic bond in both 5'-methylthioadenosine (MTA) and S-adenosylhomocysteine (SAH/AdoHcy) to adenine and the corresponding thioribose, 5'-methylthioribose and S-ribosylhomocysteine, respectively. Also cleaves 5'-deoxyadenosine, a toxic by-product of radical S-adenosylmethionine (SAM) enzymes, into 5-deoxyribose and adenine. This is 5'-methylthioadenosine/S-adenosylhomocysteine nucleosidase from Haemophilus influenzae (strain PittGG).